The following is a 202-amino-acid chain: S-modulin (202 aa).

A lipid anchor (N-myristoyl glycine) is attached at G2. 4 consecutive EF-hand domains span residues 25 to 60 (QEELCTWYQSFLKECPSGRISKKQFESIYSKFFPDA), 61 to 96 (DPKAYAQHVFRSFDANNDGTLDFKEYMIALMMTSSG), 97 to 132 (KANQKLEWAFCLYDVDGNGTINKKEVLEIITAIFKM), and 147 to 182 (TPEKRTNKIWVYFGKKDDDKLTEGEFIQGIVKNKEI). Residues D74, N76, D78, T80, E85, D110, D112, N114, T116, and E121 each contribute to the Ca(2+) site.

It belongs to the recoverin family. The N-terminus is blocked.

In terms of biological role, calcium-dependent regulator of light sensitivity of cGMP phosphodiesterase in rod outer segments. Controls rhodopsin phosphorylation in a Ca(2+)-dependent manner. The protein is S-modulin of Aquarana catesbeiana (American bullfrog).